Consider the following 224-residue polypeptide: MNSDLALLRLLQLASPGLPVGGFTYSQGLEWAVEAGWVRDIKSFSAWQREQMNDTLAYLDWPVLARLYYACKADDADAFARWSRFLLANRETAELRLEEQQRGAALARLLDGWQLGQAPAWRPSLELSQLGGMAWLAVHWSIPLRQLALGHAFAWLEGAVMAGVKLVPFGQQAAQTLLRDLGEILPGVIDQALALGDDQLGGGLPLLAIASSRHETQYTRLFRS.

Belongs to the UreF family. UreD, UreF and UreG form a complex that acts as a GTP-hydrolysis-dependent molecular chaperone, activating the urease apoprotein by helping to assemble the nickel containing metallocenter of UreC. The UreE protein probably delivers the nickel.

Its subcellular location is the cytoplasm. Its function is as follows. Required for maturation of urease via the functional incorporation of the urease nickel metallocenter. This Pseudomonas putida (strain W619) protein is Urease accessory protein UreF.